A 109-amino-acid polypeptide reads, in one-letter code: Non-structural protein ORF4a (109 aa).

In terms of assembly, interacts with host PRKRA/PACT.

It is found in the host cytoplasm. DsRNA-binding protein that plays a role in the inhibition of host innate response. Suppresses host PACT-induced activation of RIGI and MDA5 and thereby circumvents the production of type I interferons. Also prevents the activation of host NF-kappa-B. Inhibits the integrated stress response (ISR) in the infected cell by binding to dsRNA and inhibiting EIF2AK2-mediated phosphorylation of EIF2S1/eIF2-alpha. Stress granule formation is thus inhibited, which allows protein synthesis and viral replication. The sequence is that of Non-structural protein ORF4a (ORF4a) from Middle East respiratory syndrome-related coronavirus (isolate United Kingdom/H123990006/2012) (MERS-CoV).